A 208-amino-acid polypeptide reads, in one-letter code: Cytochrome c oxidase assembly protein CtaG (208 aa).

Topologically, residues 1-19 are cytoplasmic; that stretch reads MPDTQPNVSPNPIRRRGLG. The helical; Signal-anchor for type II membrane protein transmembrane segment at 20–42 threads the bilayer; the sequence is RDATVASICGLVVALMVGASFAA. The Periplasmic portion of the chain corresponds to 43–208; sequence VPFYNWFCRT…TAPDKRKGNL (166 aa).

The protein belongs to the COX11/CtaG family.

It is found in the cell inner membrane. In terms of biological role, exerts its effect at some terminal stage of cytochrome c oxidase synthesis, probably by being involved in the insertion of the copper B into subunit I. The sequence is that of Cytochrome c oxidase assembly protein CtaG from Rhodopseudomonas palustris (strain HaA2).